Reading from the N-terminus, the 504-residue chain is Ribosomal protein uS12 methylthiotransferase RimO (504 aa).

The 111-residue stretch at 21–131 (KRVGFISLGC…VMGHVRELLP (111 aa)) folds into the MTTase N-terminal domain. [4Fe-4S] cluster-binding residues include cysteine 30, cysteine 66, cysteine 95, cysteine 186, cysteine 190, and cysteine 193. The Radical SAM core domain occupies 172–408 (LTPRHYAYVK…MEVAQRISTE (237 aa)). The 77-residue stretch at 411–487 (SEKVGRVMDV…EYDLFGEVIE (77 aa)) folds into the TRAM domain.

This sequence belongs to the methylthiotransferase family. RimO subfamily. The cofactor is [4Fe-4S] cluster.

It is found in the cytoplasm. The catalysed reaction is L-aspartate(89)-[ribosomal protein uS12]-hydrogen + (sulfur carrier)-SH + AH2 + 2 S-adenosyl-L-methionine = 3-methylsulfanyl-L-aspartate(89)-[ribosomal protein uS12]-hydrogen + (sulfur carrier)-H + 5'-deoxyadenosine + L-methionine + A + S-adenosyl-L-homocysteine + 2 H(+). In terms of biological role, catalyzes the methylthiolation of an aspartic acid residue of ribosomal protein uS12. The protein is Ribosomal protein uS12 methylthiotransferase RimO of Deinococcus radiodurans (strain ATCC 13939 / DSM 20539 / JCM 16871 / CCUG 27074 / LMG 4051 / NBRC 15346 / NCIMB 9279 / VKM B-1422 / R1).